Reading from the N-terminus, the 772-residue chain is Carnitine O-palmitoyltransferase 1, muscle isoform (772 aa).

Topologically, residues 1 to 47 (MAEAHQAVAFQFTVTPDGVDFRLSREALKHVYLSGINSWKKRLIRIK) are cytoplasmic. Residues 48–73 (NGILRGVYPGSPTSWLVVIMATVGSS) traverse the membrane as a helical segment. Topologically, residues 74–102 (FCNVDISLGLVSCIQRCLPQGCGPYQTPQ) are mitochondrial intermembrane. The helical transmembrane segment at 103-122 (TRALLSMAIFSTGVWVTGIF) threads the bilayer. The Cytoplasmic portion of the chain corresponds to 123 to 772 (FFRQTLKLLL…DLFQVPKAYS (650 aa)). Catalysis depends on H473, which acts as the Proton acceptor. 555 to 567 (GKGLIKKCRTSPD) contributes to the CoA binding site. Residues Y589 and T602 each coordinate (R)-carnitine.

It belongs to the carnitine/choline acetyltransferase family. Strong expression in heart and skeletal muscle. No expression in liver and kidney.

The protein localises to the mitochondrion outer membrane. The catalysed reaction is (R)-carnitine + hexadecanoyl-CoA = O-hexadecanoyl-(R)-carnitine + CoA. Its pathway is lipid metabolism; fatty acid beta-oxidation. Functionally, catalyzes the transfer of the acyl group of long-chain fatty acid-CoA conjugates onto carnitine, an essential step for the mitochondrial uptake of long-chain fatty acids and their subsequent beta-oxidation in the mitochondrion. In Homo sapiens (Human), this protein is Carnitine O-palmitoyltransferase 1, muscle isoform (CPT1B).